The primary structure comprises 48 residues: Cytochrome b559 subunit beta (48 aa).

A helical transmembrane segment spans residues 23–39 (WLAVHALAIPTVFFLGA). Histidine 27 is a binding site for heme.

This sequence belongs to the PsbE/PsbF family. Heterodimer of an alpha subunit and a beta subunit. PSII is composed of 1 copy each of membrane proteins PsbA, PsbB, PsbC, PsbD, PsbE, PsbF, PsbH, PsbI, PsbJ, PsbK, PsbL, PsbM, PsbT, PsbX, PsbY, Psb30/Ycf12, peripheral proteins PsbO, CyanoQ (PsbQ), PsbU, PsbV and a large number of cofactors. It forms dimeric complexes. The cofactor is heme b.

It is found in the cellular thylakoid membrane. This b-type cytochrome is tightly associated with the reaction center of photosystem II (PSII). PSII is a light-driven water:plastoquinone oxidoreductase that uses light energy to abstract electrons from H(2)O, generating O(2) and a proton gradient subsequently used for ATP formation. It consists of a core antenna complex that captures photons, and an electron transfer chain that converts photonic excitation into a charge separation. The polypeptide is Cytochrome b559 subunit beta (Prochlorococcus marinus (strain SARG / CCMP1375 / SS120)).